The chain runs to 585 residues: Pyruvate kinase (585 aa).

Residue Arg-32 coordinates substrate. Residues Asn-34, Ser-36, Asp-66, and Thr-67 each coordinate K(+). 34-37 (NFSH) contacts ATP. ATP contacts are provided by Arg-73 and Lys-156. A Mg(2+)-binding site is contributed by Glu-221. Gly-244, Asp-245, and Thr-277 together coordinate substrate. Asp-245 provides a ligand contact to Mg(2+).

The protein belongs to the pyruvate kinase family. In the C-terminal section; belongs to the PEP-utilizing enzyme family. Requires Mg(2+) as cofactor. K(+) serves as cofactor.

The enzyme catalyses pyruvate + ATP = phosphoenolpyruvate + ADP + H(+). It participates in carbohydrate degradation; glycolysis; pyruvate from D-glyceraldehyde 3-phosphate: step 5/5. This chain is Pyruvate kinase (pyk), found in Staphylococcus aureus (strain MRSA252).